The chain runs to 138 residues: Basic phospholipase A2 beta-bungarotoxin A-AL3 chain (138 aa).

The first 10 residues, 1 to 10, serve as a signal peptide directing secretion; that stretch reads LAVCVSLIGA. The propeptide occupies 11 to 18; that stretch reads ANIPPQHL. 6 cysteine pairs are disulfide-bonded: Cys-45/Cys-137, Cys-47/Cys-63, Cys-62/Cys-118, Cys-69/Cys-111, Cys-79/Cys-104, and Cys-97/Cys-109. Residues Tyr-46, Gly-48, and Gly-50 each coordinate Ca(2+). His-66 is an active-site residue. Asp-67 provides a ligand contact to Ca(2+). The active site involves Asp-112.

Belongs to the phospholipase A2 family. Group I subfamily. D49 sub-subfamily. As to quaternary structure, heterodimer; disulfide-linked. The A chains have phospholipase A2 activity and the B chains show homology with the basic protease inhibitors. It depends on Ca(2+) as a cofactor. As to expression, expressed by the venom gland.

The protein resides in the secreted. It catalyses the reaction a 1,2-diacyl-sn-glycero-3-phosphocholine + H2O = a 1-acyl-sn-glycero-3-phosphocholine + a fatty acid + H(+). Snake venom phospholipase A2 (PLA2) that inhibits neuromuscular transmission by blocking acetylcholine release from the nerve termini. PLA2 catalyzes the calcium-dependent hydrolysis of the 2-acyl groups in 3-sn-phosphoglycerides. The protein is Basic phospholipase A2 beta-bungarotoxin A-AL3 chain of Bungarus multicinctus (Many-banded krait).